Consider the following 102-residue polypeptide: Glycoprotein 24A (102 aa).

The protein belongs to the csb family. Post-translationally, O-glycosylated.

Its subcellular location is the cell surface. Functionally, cell-cell adhesion during early development. This is Glycoprotein 24A (csbA) from Dictyostelium discoideum (Social amoeba).